The following is a 282-amino-acid chain: Protoheme IX farnesyltransferase (282 aa).

Helical transmembrane passes span 9–29, 39–59, 79–99, 102–122, 139–159, 165–185, 210–230, 231–251, and 261–281; these read LAKP…FLLA, LPLF…GCVF, LVTG…LLIL, LVLY…GFIV, VLGG…VVNI, LALF…IAML, IMLF…VLGS, ADLF…YKSI, and VFAK…CLTM.

The protein belongs to the UbiA prenyltransferase family. Protoheme IX farnesyltransferase subfamily.

Its subcellular location is the cell inner membrane. The catalysed reaction is heme b + (2E,6E)-farnesyl diphosphate + H2O = Fe(II)-heme o + diphosphate. It participates in porphyrin-containing compound metabolism; heme O biosynthesis; heme O from protoheme: step 1/1. Converts heme B (protoheme IX) to heme O by substitution of the vinyl group on carbon 2 of heme B porphyrin ring with a hydroxyethyl farnesyl side group. The protein is Protoheme IX farnesyltransferase of Francisella tularensis subsp. holarctica (strain FTNF002-00 / FTA).